The chain runs to 502 residues: Dynein regulatory complex subunit 2 (502 aa).

Coiled-coil stretches lie at residues 96 to 160 and 252 to 285; these read DSVI…RKAI and EKSSKEIEVQMKKIQRLQEAISALKGKIVAHSRE.

The protein belongs to the DRC2 family. Component of the nexin-dynein regulatory complex (N-DRC). Interacts with DRC1.

It is found in the cytoplasm. Its subcellular location is the cytoskeleton. The protein localises to the flagellum basal body. The protein resides in the cell projection. It localises to the cilium. It is found in the flagellum. Its subcellular location is the flagellum axoneme. Its function is as follows. Component of the nexin-dynein regulatory complex (N-DRC), a key regulator of ciliary/flagellar motility which maintains the alignment and integrity of the distal axoneme and regulates microtubule sliding in motile axonemes. Plays a critical role in the assembly of N-DRC and also stabilizes the assembly of multiple inner dynein arms and radial spokes. Coassembles with DRC1 to form a central scaffold needed for assembly of the N-DRC and its attachment to the outer doublet microtubules. This is Dynein regulatory complex subunit 2 (Ccdc65) from Rattus norvegicus (Rat).